Reading from the N-terminus, the 554-residue chain is Protein NODULATION SIGNALING PATHWAY 1 (554 aa).

The disordered stretch occupies residues 76-165 (TTSTTSLEPN…NSNNGNNKDG (90 aa)). The span at 82-91 (LEPNSFNNIP) shows a compositional bias: polar residues. Over residues 95–107 (LPKKRNAEDELSL) the composition is skewed to basic and acidic residues. A compositionally biased stretch (low complexity) spans 150–162 (AKANGSNSNNGNN). A GRAS domain is found at 159–548 (NGNNKDGRWA…QPVSFCSLWK (390 aa)). The segment at 166-227 (RWAEQLLNPC…HHLSSSSSST (62 aa)) is leucine repeat I (LRI). Residues 246–315 (LLKFYEFSPW…GGPPPLVRLT (70 aa)) form a VHIID region. The VHIID motif lies at 281–285 (LHILD). A leucine repeat II (LRII) region spans residues 331-373 (TPFSIGPCGDTFSSGLLGYAQSLNVNLQIKKLDNHPLQTLNAK). The PFYRE stretch occupies residues 383–468 (LIVCAQFRLH…RDSDERKMME (86 aa)). An SAW region spans residues 471 to 548 (AAKALTNQRE…QPVSFCSLWK (78 aa)).

Belongs to the GRAS family. In terms of tissue distribution, expressed in epidermal and cortical root cells.

It localises to the nucleus. In terms of biological role, transcriptional regulator essential for Nod-factor-induced gene expression. Acts downstream of calcium spiking. May be a target of DMI3, a calcium/calmodulin-dependent protein kinase (CCaMK). Is essential for Nod factor-elicited expression of ERN1. Transcription factor involved in the control of strigolactone biosynthesis in roots through the activation of the beta-carotene isomerase D27, which participates in a pathway leading to biosynthesis of strigolactones. This chain is Protein NODULATION SIGNALING PATHWAY 1, found in Medicago truncatula (Barrel medic).